The primary structure comprises 845 residues: AdoMet-dependent rRNA methyltransferase SPB1 (845 aa).

S-adenosyl-L-methionine contacts are provided by Gly58, Trp60, Asp78, Asp94, and Asp119. Residue Lys159 is the Proton acceptor of the active site. Disordered stretches follow at residues 223 to 247 and 279 to 298; these read GGGN…SQRQ and SLNK…DDDH. 2 coiled-coil regions span residues 366–402 and 464–502; these read TEEQ…KEII and DEEE…ERDA. The segment covering 496-512 has biased composition (basic and acidic residues); sequence RKAERDANYRAKQARGD. Disordered regions lie at residues 496 to 546, 587 to 660, and 788 to 821; these read RKAE…DDDE, ENKT…HQQK, and KLNK…VKGK. 4 stretches are compositionally biased toward acidic residues: residues 513 to 528, 536 to 545, 610 to 624, and 633 to 648; these read ADDE…NDDV, MESESDDDDD, NEND…ESDF, and DDDD…DDEV. Residues 739 to 796 adopt a coiled-coil conformation; sequence IKKVLEAQSRKKLRALKRLEKIKKKSDLINEDSGKSERDKADEISKLMKKLNKKQKQK. Residues 788–797 show a composition bias toward basic residues; sequence KLNKKQKQKP.

The protein belongs to the class I-like SAM-binding methyltransferase superfamily. RNA methyltransferase RlmE family. SPB1 subfamily. In terms of assembly, component of the nucleolar and nucleoplasmic pre-60S ribosomal particle.

Its subcellular location is the nucleus. It is found in the nucleolus. The catalysed reaction is a ribonucleotide in rRNA + S-adenosyl-L-methionine = a 2'-O-methylribonucleotide in rRNA + S-adenosyl-L-homocysteine + H(+). In terms of biological role, required for proper assembly of pre-ribosomal particles during the biogenesis of the 60S ribosomal subunit. The sequence is that of AdoMet-dependent rRNA methyltransferase SPB1 from Candida albicans (strain SC5314 / ATCC MYA-2876) (Yeast).